We begin with the raw amino-acid sequence, 444 residues long: UPF0053 protein YhdP (444 aa).

The CNNM transmembrane domain occupies 1–201 (MDIVNLILVA…YKSGEINQSE (201 aa)). 3 helical membrane passes run 7-27 (ILVA…FAII), 61-81 (ACQL…ESTI), and 101-121 (VISF…VGEL). CBS domains lie at 220-282 (MIPR…SVDS) and 284-344 (ISQF…IRDE).

The protein belongs to the UPF0053 family.

Its subcellular location is the cell membrane. The polypeptide is UPF0053 protein YhdP (yhdP) (Bacillus subtilis (strain 168)).